Here is a 175-residue protein sequence, read N- to C-terminus: ATP synthase subunit b, chloroplastic (175 aa).

A helical transmembrane segment spans residues 26–44 (VINLAVVIGVVVSFVGDAV).

Belongs to the ATPase B chain family. F-type ATPases have 2 components, F(1) - the catalytic core - and F(0) - the membrane proton channel. F(1) has five subunits: alpha(3), beta(3), gamma(1), delta(1), epsilon(1). F(0) has four main subunits: a(1), b(1), b'(1) and c(10-14). The alpha and beta chains form an alternating ring which encloses part of the gamma chain. F(1) is attached to F(0) by a central stalk formed by the gamma and epsilon chains, while a peripheral stalk is formed by the delta, b and b' chains.

It is found in the plastid. The protein resides in the chloroplast thylakoid membrane. In terms of biological role, f(1)F(0) ATP synthase produces ATP from ADP in the presence of a proton or sodium gradient. F-type ATPases consist of two structural domains, F(1) containing the extramembraneous catalytic core and F(0) containing the membrane proton channel, linked together by a central stalk and a peripheral stalk. During catalysis, ATP synthesis in the catalytic domain of F(1) is coupled via a rotary mechanism of the central stalk subunits to proton translocation. Component of the F(0) channel, it forms part of the peripheral stalk, linking F(1) to F(0). This Tupiella akineta (Green alga) protein is ATP synthase subunit b, chloroplastic.